We begin with the raw amino-acid sequence, 144 residues long: 3-hydroxyacyl-[acyl-carrier-protein] dehydratase FabZ (144 aa).

The active site involves His48.

This sequence belongs to the thioester dehydratase family. FabZ subfamily.

The protein localises to the cytoplasm. The catalysed reaction is a (3R)-hydroxyacyl-[ACP] = a (2E)-enoyl-[ACP] + H2O. Involved in unsaturated fatty acids biosynthesis. Catalyzes the dehydration of short chain beta-hydroxyacyl-ACPs and long chain saturated and unsaturated beta-hydroxyacyl-ACPs. In Listeria monocytogenes serotype 4b (strain CLIP80459), this protein is 3-hydroxyacyl-[acyl-carrier-protein] dehydratase FabZ.